Consider the following 219-residue polypeptide: 3-demethoxyubiquinol 3-hydroxylase (219 aa).

The tract at residues 21–51 (RTLTPGTTQAERTPAHAAPAPDAPEAGTLPS) is disordered. Residues 35-46 (AHAAPAPDAPEA) show a composition bias toward low complexity. Fe cation is bound by residues E68, E98, H101, E150, E182, and H185.

It belongs to the COQ7 family. Fe cation is required as a cofactor.

The protein localises to the cell membrane. It carries out the reaction a 5-methoxy-2-methyl-3-(all-trans-polyprenyl)benzene-1,4-diol + AH2 + O2 = a 3-demethylubiquinol + A + H2O. The protein operates within cofactor biosynthesis; ubiquinone biosynthesis. Catalyzes the hydroxylation of 2-nonaprenyl-3-methyl-6-methoxy-1,4-benzoquinol during ubiquinone biosynthesis. This is 3-demethoxyubiquinol 3-hydroxylase from Alcanivorax borkumensis (strain ATCC 700651 / DSM 11573 / NCIMB 13689 / SK2).